The primary structure comprises 61 residues: Small ribosomal subunit protein uS14 (61 aa).

Residues Cys24, Cys27, Cys40, and Cys43 each coordinate Zn(2+).

It belongs to the universal ribosomal protein uS14 family. Zinc-binding uS14 subfamily. In terms of assembly, part of the 30S ribosomal subunit. Contacts proteins S3 and S10. Zn(2+) serves as cofactor.

Binds 16S rRNA, required for the assembly of 30S particles and may also be responsible for determining the conformation of the 16S rRNA at the A site. In Nitratidesulfovibrio vulgaris (strain ATCC 29579 / DSM 644 / CCUG 34227 / NCIMB 8303 / VKM B-1760 / Hildenborough) (Desulfovibrio vulgaris), this protein is Small ribosomal subunit protein uS14.